Reading from the N-terminus, the 493-residue chain is 2-amino-4-deoxychorismate synthase (493 aa).

Belongs to the anthranilate synthase component I family. Mg(2+) is required as a cofactor.

The enzyme catalyses (2S)-2-amino-4-deoxychorismate + L-glutamate = chorismate + L-glutamine. Functionally, converts chorismate to 2-amino-4-deoxychorismate (ADIC). Involved in the biosynthesis of the benzoxazolinate moiety of the enediyne antitumor antibiotic C-1027. This is 2-amino-4-deoxychorismate synthase (sgcD) from Streptomyces globisporus.